Consider the following 482-residue polypeptide: MFS-type transporter traF (482 aa).

Residues 1–14 are compositionally biased toward polar residues; the sequence is MTSGTEQATLNTEE. The interval 1–22 is disordered; sequence MTSGTEQATLNTEENGSDSDHL. 2 N-linked (GlcNAc...) asparagine glycosylation sites follow: Asn15 and Asn45. The next 9 membrane-spanning stretches (helical) occupy residues 52–72, 89–109, 125–145, 149–169, 176–196, 209–229, 275–295, 312–332, and 354–374; these read VFIT…SSVM, LSIL…LLFG, VFLF…ATIF, FLCG…LADL, GIAV…GPLV, WTQW…FVFC, PILA…YLCF, IGSL…VIII, and LVPM…FAWT. A glycan (N-linked (GlcNAc...) asparagine) is linked at Asn376. 3 helical membrane passes run 379-399, 427-447, and 448-468; these read LPWA…LLIF, LLGA…GVPW, and AMSL…LFFI.

The protein belongs to the major facilitator superfamily. CAR1 family.

Its subcellular location is the membrane. Functionally, MFS-type transporter; part of the tra gene cluster that produces terrestric acid. The clavatol biosynthesis cluster cla and the terrestric acid cluster tra are both involved in the production of peniphenones and penilactones. This chain is MFS-type transporter traF, found in Penicillium crustosum (Blue mold fungus).